Consider the following 108-residue polypeptide: UPF0102 protein WS0451 (108 aa).

Belongs to the UPF0102 family.

This chain is UPF0102 protein WS0451, found in Wolinella succinogenes (strain ATCC 29543 / DSM 1740 / CCUG 13145 / JCM 31913 / LMG 7466 / NCTC 11488 / FDC 602W) (Vibrio succinogenes).